Reading from the N-terminus, the 138-residue chain is Methane monooxygenase regulatory protein B (138 aa).

Belongs to the TmoD/XamoD family. In terms of assembly, the soluble methane monooxygenase (sMMO) consists of four components A/MMOH (composed of alpha/MmoX, beta/MmoY and gamma/MmoZ), B/MMOB (MmoB), C/MMOR (MmoC) and D/MMOD (MmoD).

In terms of biological role, the B protein acts as a regulator of electron flow through the soluble mmo complex, switching the enzyme from an oxidase to a hydroxylase in the presence of the substrate. The sequence is that of Methane monooxygenase regulatory protein B (mmoB) from Methylosinus trichosporium.